Reading from the N-terminus, the 667-residue chain is Serine/threonine-protein kinase BUR1 (667 aa).

The Protein kinase domain occupies Tyr60 to Phe378. Residues Leu66 to Val74 and Lys89 each bind ATP. Residue Asp207 is the Proton acceptor of the active site. The disordered stretch occupies residues His408 to Tyr667. The segment covering Lys432–Gln443 has biased composition (basic and acidic residues). Positions Asn494–Arg516 are enriched in polar residues. Positions Tyr541–Arg556 are enriched in low complexity. Composition is skewed to polar residues over residues Asp582 to Ser594, Ser602 to Ile611, and Asn622 to Gln632. Residues Asp633–Tyr667 show a composition bias toward basic and acidic residues.

The protein belongs to the protein kinase superfamily. CMGC Ser/Thr protein kinase family. CDC2/CDKX subfamily.

The protein resides in the nucleus. The catalysed reaction is L-seryl-[protein] + ATP = O-phospho-L-seryl-[protein] + ADP + H(+). The enzyme catalyses L-threonyl-[protein] + ATP = O-phospho-L-threonyl-[protein] + ADP + H(+). It carries out the reaction [DNA-directed RNA polymerase] + ATP = phospho-[DNA-directed RNA polymerase] + ADP + H(+). Functionally, serine/threonine-protein kinase involved in transcription regulation. Phosphorylates the UBC2/RAD6 ubiquitin-conjugating enzyme (E2), leading to monoubiquitination of histone H2B and the silencing of telomeric-associated genes. Also required for histone H3 methylation. Necessary for the recovery from pheromone-induced growth arrest in the cell cycle G1 phase. The chain is Serine/threonine-protein kinase BUR1 (BUR1) from Candida glabrata (strain ATCC 2001 / BCRC 20586 / JCM 3761 / NBRC 0622 / NRRL Y-65 / CBS 138) (Yeast).